We begin with the raw amino-acid sequence, 856 residues long: MAP kinase phosphatase with leucine-rich repeats protein 3 (856 aa).

The segment covering 1 to 10 has biased composition (low complexity); the sequence is MGNSHSSENG. 3 disordered regions span residues 1–24, 84–195, and 214–326; these read MGNS…GGGS, VKKN…SSVL, and DDNS…NAKD. Residue G2 is the site of N-myristoyl glycine attachment. Positions 11 to 24 are enriched in gly residues; the sequence is GNSGSGGGSGGGGS. Over residues 90–142 the composition is skewed to low complexity; the sequence is NSSNNNSNNNSNNNNNNNTLNNSTIITTTTTTTTTSTPTTTIMITPPQQQQQQ. The segment covering 155–165 has biased composition (polar residues); it reads ESSTPNEQQIR. Composition is skewed to low complexity over residues 178–195 and 224–243; these read ESSF…SSVL and QQQQ…QQTQ. Composition is skewed to polar residues over residues 254–265 and 272–281; these read IVNNKSSSTTNI and AQTSRSTSIP. Over residues 306 to 323 the composition is skewed to low complexity; sequence NSLSSSNIITPNNTTNTN. 8 LRR repeats span residues 344 to 365, 370 to 391, 392 to 413, 416 to 437, 439 to 461, 462 to 484, 485 to 506, and 507 to 528; these read KIFS…ILSI, EIQE…QLVK, SLTT…VFIE, SLTS…IDQI, NLKY…SNLS, QLIS…DDLI, NLRM…RKLV, and NLVT…FAYL. The tract at residues 554-577 is disordered; it reads NINSNNNDSNNSNNNNNNNNDNNN. The region spanning 632–773 is the Tyrosine-protein phosphatase domain; sequence IPSEIIPGIF…LLKYEAKLFC (142 aa). The active-site Phosphocysteine intermediate is the C717. The disordered stretch occupies residues 810–856; the sequence is INNSSNSNNNNSTDNSNNSSTSTTPNLSSLSSDSSSSASLSKLSISK.

Belongs to the protein-tyrosine phosphatase family. Non-receptor class dual specificity subfamily.

The enzyme catalyses O-phospho-L-tyrosyl-[protein] + H2O = L-tyrosyl-[protein] + phosphate. It catalyses the reaction O-phospho-L-seryl-[protein] + H2O = L-seryl-[protein] + phosphate. It carries out the reaction O-phospho-L-threonyl-[protein] + H2O = L-threonyl-[protein] + phosphate. Probable phosphatase with dual specificity toward Ser/Thr and Tyr-containing proteins. The chain is MAP kinase phosphatase with leucine-rich repeats protein 3 (mpl3) from Dictyostelium discoideum (Social amoeba).